A 989-amino-acid chain; its full sequence is Cation-chloride cotransporter 1 (989 aa).

Positions 1-10 (MENGEIEGAA) are enriched in acidic residues. Residues 1–29 (MENGEIEGAADDGVPVPAPPNGRRYRPVG) form a disordered region. Residues 1-132 (MENGEIEGAA…GRPKETGPKF (132 aa)) lie on the Cytoplasmic side of the membrane. Residues 133–153 (GTMMGVFVPCLQNILGIIYYI) traverse the membrane as a helical segment. The Extracellular segment spans residues 154 to 167 (RFTWIVGMAGVWQS). A helical membrane pass occupies residues 168–188 (LVLVSFCGACTFLTGISLSAI). Residues 189-214 (ATNGAMKGGGPYYLIGRALGPEVGVS) are Cytoplasmic-facing. A helical membrane pass occupies residues 215–235 (IGLCFFLGNAVAGSMYVLGAV). Topologically, residues 236–280 (ETFLDAVPSAGFFKESVTVVNNTLVNGTATASTATISTPSLHDLQ) are extracellular. N-linked (GlcNAc...) asparagine glycans are attached at residues Asn256 and Asn261. The helical transmembrane segment at 281-301 (VYGVIVTILLCFIVFGGVKII) threads the bilayer. The Cytoplasmic portion of the chain corresponds to 302-304 (NKV). The helical transmembrane segment at 305 to 325 (APAFLIPVLFSLLCIYLGVFI) threads the bilayer. Residues 326 to 365 (APRHNAPKGITGLSITTFKDNWGSEYQRTNNAGVPDPNGS) are Extracellular-facing. N-linked (GlcNAc...) asparagine glycosylation is present at Asn363. A helical membrane pass occupies residues 366 to 386 (IYWDFNALVGLFFPAVTGIMA). Residues 387 to 405 (GSNRSASLKDTQRSIPIGT) lie on the Cytoplasmic side of the membrane. A helical membrane pass occupies residues 406 to 426 (LSATLTTTAMYLFSVLLFGAL). Topologically, residues 427 to 441 (ATREELLTDRLLTAT) are extracellular. A helical membrane pass occupies residues 442–462 (VAWPAPAVIYIGIILSTLGAA). At 463–498 (LQSLTGAPRLLAAIANDDILPVLNYFKVSEGAEPHS) the chain is on the cytoplasmic side. A helical membrane pass occupies residues 499–519 (ATLFTAFICICCVVIGNLDLI). The Extracellular segment spans residues 520–522 (TPT). Residues 523–543 (ITMFFLLCYAGVNLSCFLLDL) form a helical membrane-spanning segment. Residues 544–551 (LDAPSWRP) lie on the Cytoplasmic side of the membrane. A helical transmembrane segment spans residues 552 to 572 (RWKFHHWSLSLVGALLCVVIM). Topologically, residues 573-578 (FLISWS) are extracellular. A helical membrane pass occupies residues 579–599 (FTVVSLALASLIYYYVSLKGK). Residues 600 to 989 (AGDWGDGFKS…YRRDVVTFFT (390 aa)) lie on the Cytoplasmic side of the membrane.

It belongs to the SLC12A transporter family. In terms of tissue distribution, expressed in roots, stems and leaves with higher expression in root and leaf tips.

It localises to the membrane. In terms of biological role, probable cation/chloride cotransporter that may mediate potassium-chloride cotransport. Involved in plant development and K(+) and Cl(-) homeostasis. May not be involved in sodium-chloride cotransport. This chain is Cation-chloride cotransporter 1 (CCC1), found in Oryza sativa subsp. japonica (Rice).